The primary structure comprises 186 residues: Interferon beta (186 aa).

The signal sequence occupies residues 1-21 (MTGRCILQIALLVCFFTTAHS). The residue at position 24 (tyrosine 24) is a Phosphotyrosine. N-linked (GlcNAc...) asparagine glycosylation is found at asparagine 46, asparagine 101, asparagine 131, and asparagine 136. Cysteines 52 and 161 form a disulfide.

Belongs to the alpha/beta interferon family. Monomer.

The protein resides in the secreted. In terms of biological role, type I interferon cytokine that plays a key role in the innate immune response to infection, developing tumors and other inflammatory stimuli. Signals via binding to high-affinity (IFNAR2) and low-affinity (IFNAR1) heterodimeric receptor, activating the canonical Jak-STAT signaling pathway resulting in transcriptional activation or repression of interferon-regulated genes that encode the effectors of the interferon response, such as antiviral proteins, regulators of cell proliferation and differentiation, and immunoregulatory proteins. Signals mostly via binding to a IFNAR1-IFNAR2 heterodimeric receptor, but can also function with IFNAR1 alone and independently of Jak-STAT pathways. Elicits a wide variety of responses, including antiviral and antibacterial activities, and can regulate the development of B-cells, myelopoiesis and lipopolysaccharide (LPS)-inducible production of tumor necrosis factor. Plays a role in neuronal homeostasis by regulating dopamine turnover and protecting dopaminergic neurons: acts by promoting neuronal autophagy and alpha-synuclein clearance, thereby preventing dopaminergic neuron loss. IFNB1 is more potent than interferon-alpha (IFN-alpha) in inducing the apoptotic and antiproliferative pathways required for control of tumor cell growth. This Felis catus (Cat) protein is Interferon beta (IFNB1).